A 406-amino-acid polypeptide reads, in one-letter code: Acetate kinase (406 aa).

Asn-7 is a binding site for Mg(2+). Lys-14 lines the ATP pocket. Substrate is bound at residue Arg-90. The active-site Proton donor/acceptor is the Asp-147. ATP contacts are provided by residues 207–211, 283–285, and 331–335; these read HLGNG, DMR, and GVGEN. Glu-385 contacts Mg(2+).

This sequence belongs to the acetokinase family. As to quaternary structure, homodimer. The cofactor is Mg(2+). Mn(2+) serves as cofactor.

Its subcellular location is the cytoplasm. The enzyme catalyses acetate + ATP = acetyl phosphate + ADP. The protein operates within metabolic intermediate biosynthesis; acetyl-CoA biosynthesis; acetyl-CoA from acetate: step 1/2. In terms of biological role, catalyzes the formation of acetyl phosphate from acetate and ATP. Can also catalyze the reverse reaction. The polypeptide is Acetate kinase (Fervidobacterium nodosum (strain ATCC 35602 / DSM 5306 / Rt17-B1)).